The sequence spans 591 residues: L-fucose isomerase (591 aa).

Catalysis depends on proton acceptor residues E337 and D361. The Mn(2+) site is built by E337, D361, and H528.

The protein belongs to the L-fucose isomerase family. In terms of assembly, homohexamer. It depends on Mn(2+) as a cofactor.

Its subcellular location is the cytoplasm. The catalysed reaction is L-fucose = L-fuculose. It participates in carbohydrate degradation; L-fucose degradation; L-lactaldehyde and glycerone phosphate from L-fucose: step 1/3. Converts the aldose L-fucose into the corresponding ketose L-fuculose. The polypeptide is L-fucose isomerase (Escherichia coli O6:H1 (strain CFT073 / ATCC 700928 / UPEC)).